A 539-amino-acid chain; its full sequence is O-phosphoserine--tRNA(Cys) ligase (539 aa).

Substrate is bound by residues 188–190 (HMT), 233–235 (SAS), 275–276 (YY), and asparagine 327.

It belongs to the class-II aminoacyl-tRNA synthetase family. O-phosphoseryl-tRNA(Cys) synthetase subfamily. As to quaternary structure, homotetramer. Interacts with SepCysS.

The catalysed reaction is tRNA(Cys) + O-phospho-L-serine + ATP = O-phospho-L-seryl-tRNA(Cys) + AMP + diphosphate. Functionally, catalyzes the attachment of O-phosphoserine (Sep) to tRNA(Cys). The sequence is that of O-phosphoserine--tRNA(Cys) ligase from Methanococcoides burtonii (strain DSM 6242 / NBRC 107633 / OCM 468 / ACE-M).